The following is a 404-amino-acid chain: Alanine racemase (404 aa).

Lysine 34 functions as the Proton acceptor; specific for D-alanine in the catalytic mechanism. Lysine 34 carries the N6-(pyridoxal phosphate)lysine modification. Arginine 133 is a binding site for substrate. The region spanning glutamate 226 to arginine 273 is the RPE1 insert domain. Tyrosine 298 serves as the catalytic Proton acceptor; specific for L-alanine. Residue methionine 346 coordinates substrate.

This sequence belongs to the alanine racemase family. The cofactor is pyridoxal 5'-phosphate.

It carries out the reaction L-alanine = D-alanine. Its pathway is amino-acid biosynthesis; D-alanine biosynthesis; D-alanine from L-alanine: step 1/1. Catalyzes the interconversion of L-alanine and D-alanine. May also act on other amino acids. In Rickettsia prowazekii (strain Madrid E), this protein is Alanine racemase (alr).